A 342-amino-acid polypeptide reads, in one-letter code: Adenylate isopentenyltransferase 6, chloroplastic (342 aa).

Residues 1–33 (MQQLMTLLSPPLSHSSLLPTVTTKFGSPRLVTT) constitute a chloroplast transit peptide. Residue 52-59 (GTTGTGKS) coordinates ATP.

The protein belongs to the IPP transferase family. Expressed in siliques, at the mRNA level.

It localises to the plastid. The protein resides in the chloroplast. The catalysed reaction is dimethylallyl diphosphate + ADP = N(6)-(dimethylallyl)adenosine 5'-diphosphate + diphosphate. The enzyme catalyses dimethylallyl diphosphate + ATP = N(6)-(dimethylallyl)adenosine 5'-triphosphate + diphosphate. Its function is as follows. Involved in cytokinin biosynthesis. Catalyzes the transfer of an isopentenyl group from dimethylallyl diphosphate (DMAPP) to ATP and ADP. This is Adenylate isopentenyltransferase 6, chloroplastic (IPT6) from Arabidopsis thaliana (Mouse-ear cress).